Consider the following 449-residue polypeptide: MDRVYEIPEEPNVDPVSSLEEDVIRGANPRFTFPFSILFSTFLYCGEAASALYMVRIYRKNSETYWMTYTFSFFMFSSIMVQLTLIFVHRDLAKDKPLSLFMHLILLGPVIRCLEAMIKYLTLWKKEEQEEPYVSLTRKKMLIDGEEVLIEWEVGHSIRTLAMHRNAYKRMSQIQAFLGSVPQLTYQLYVSLISAEVPLGRVVLMVFSLVSVTYGATLCNMLAIQIKYDDYKIRLGPLEVLCITIWRTLEITSRLLILVLFSATLKLKAVPFLVLNFLIILFEPWIKFWRSGAQMPNNIEKNFSRVGTLVVLISVTILYAGINFSCWSALQLRLADRDLVDKGQNWGHMGLHYSVRLVENVIMVLVFKFFGVKVLLNYCHSLIALQLIIAYLISIGFMLLFFQYLHPLRSLFTHNVVDYLHCVCCHQHPRTRVENSEPPFETEARQSVV.

Transmembrane regions (helical) follow at residues 35-55, 68-88, 98-118, 174-194, 202-222, 241-261, 269-289, 306-326, 357-377, and 382-402; these read FSIL…LYMV, TYTF…LIFV, LSLF…EAMI, IQAF…SLIS, VVLM…CNML, LCIT…LVLF, AVPF…IKFW, VGTL…NFSC, LVEN…VLLN, and LIAL…LLFF.

The protein belongs to the XK family. As to expression, expressed predominantly in the placenta, in syncytiotrophoblasts. Moderate levels in the adrenal gland, low levels in the trachea and very low levels in the bone marrow.

Its subcellular location is the cell membrane. The sequence is that of XK-related protein 2 (XKRX) from Homo sapiens (Human).